The sequence spans 625 residues: 1-deoxy-D-xylulose-5-phosphate synthase (625 aa).

Thiamine diphosphate contacts are provided by residues His80 and 121 to 123 (GHS). A Mg(2+)-binding site is contributed by Asp152. Residues 153-154 (GA), Asn181, Tyr290, and Glu371 contribute to the thiamine diphosphate site. Mg(2+) is bound at residue Asn181.

This sequence belongs to the transketolase family. DXPS subfamily. In terms of assembly, homodimer. It depends on Mg(2+) as a cofactor. Thiamine diphosphate serves as cofactor.

The enzyme catalyses D-glyceraldehyde 3-phosphate + pyruvate + H(+) = 1-deoxy-D-xylulose 5-phosphate + CO2. It functions in the pathway metabolic intermediate biosynthesis; 1-deoxy-D-xylulose 5-phosphate biosynthesis; 1-deoxy-D-xylulose 5-phosphate from D-glyceraldehyde 3-phosphate and pyruvate: step 1/1. Functionally, catalyzes the acyloin condensation reaction between C atoms 2 and 3 of pyruvate and glyceraldehyde 3-phosphate to yield 1-deoxy-D-xylulose-5-phosphate (DXP). The polypeptide is 1-deoxy-D-xylulose-5-phosphate synthase (Haemophilus influenzae (strain 86-028NP)).